Here is a 380-residue protein sequence, read N- to C-terminus: Flap endonuclease 1-A (380 aa).

Residues 1–105 (MGIKGLTKLL…QELAKRYSKR (105 aa)) are N-domain. Asp-34 is a Mg(2+) binding site. Residue Arg-71 coordinates DNA. Positions 87, 159, 161, 180, and 182 each coordinate Mg(2+). An I-domain region spans residues 123–254 (AIEKFSKRTV…QTALKLIRQH (132 aa)). Residue Glu-159 coordinates DNA. Residues Gly-232 and Asp-234 each contribute to the DNA site. Asp-234 lines the Mg(2+) pocket. The interaction with PCNA stretch occupies residues 336-344 (SQGRLESFF). Residues 351-380 (SVPLKRKDTSEKPTKAVANKKTKGAGGKKK) form a disordered region. Over residues 355-364 (KRKDTSEKPT) the composition is skewed to basic and acidic residues. Positions 368 to 380 (ANKKTKGAGGKKK) are enriched in basic residues.

The protein belongs to the XPG/RAD2 endonuclease family. FEN1 subfamily. As to quaternary structure, interacts with PCNA. Three molecules of FEN1 bind to one PCNA trimer with each molecule binding to one PCNA monomer. PCNA stimulates the nuclease activity without altering cleavage specificity. Mg(2+) serves as cofactor. In terms of processing, phosphorylated. Phosphorylation upon DNA damage induces relocalization to the nuclear plasma. As to expression, strongly expressed in proliferating tissues: root and shoot apical meristem, tiller bud, leaf, ligule primordia, marginal meristem of young leaves and panicles. Not expressed in mature leaves when exposed to UV.

The protein resides in the nucleus. Its subcellular location is the nucleolus. The protein localises to the nucleoplasm. It localises to the mitochondrion. Its activity is regulated as follows. Inhibited by NaCl. Structure-specific nuclease with 5'-flap endonuclease and 5'-3' exonuclease activities involved in DNA replication and repair. During DNA replication, cleaves the 5'-overhanging flap structure that is generated by displacement synthesis when DNA polymerase encounters the 5'-end of a downstream Okazaki fragment. It enters the flap from the 5'-end and then tracks to cleave the flap base, leaving a nick for ligation. Also involved in the long patch base excision repair (LP-BER) pathway, by cleaving within the apurinic/apyrimidinic (AP) site-terminated flap. Acts as a genome stabilization factor that prevents flaps from equilibrating into structures that lead to duplications and deletions. Also possesses 5'-3' exonuclease activity on nicked or gapped double-stranded DNA, and exhibits RNase H activity. Also involved in replication and repair of rDNA and in repairing mitochondrial DNA. May be required for cell proliferation. The chain is Flap endonuclease 1-A from Oryza sativa subsp. japonica (Rice).